A 444-amino-acid chain; its full sequence is MSRLFGTDGVRGLANADLTPELALSVASAAARVLYERDDSRRRVALVGRDPRASGEMLEAAVTAGLTSAGADVLRVGVLPTPAVAHLVSAMRADLGVMISASHNPMPDNGIKLFAAGGHKLPDAVEDEIADRLDERVDRPTGAAVGRARDVPDAGSRYVDHLLEATPQPLDGLRVVVDCANGAAAAVAPSAYRLAGAEVIALNAEPDGLNINEGVGSTHLDGLRAAVREHRADLGLAHDGDADRCLAVDATGSVVDGDQIMAILAVAMKEAGELADDTLVTTVMSNLGLHLAMREHGVKLRTTAVGDRYVLAELREGGFSLGGEQSGHVVLPDHATTGDGLLTALRLMGRVVETGRSLAELAATMTRLPQVLVNVRVADKATACGAPEVAKAVAEAEAELGDEGRVLLRPSGTEQLVRVMVEARSEGTAQRVAGRLAELVAAIR.

The active-site Phosphoserine intermediate is serine 102. Serine 102, aspartate 239, aspartate 241, and aspartate 243 together coordinate Mg(2+). Serine 102 is modified (phosphoserine).

This sequence belongs to the phosphohexose mutase family. The cofactor is Mg(2+). In terms of processing, activated by phosphorylation.

It catalyses the reaction alpha-D-glucosamine 1-phosphate = D-glucosamine 6-phosphate. Functionally, catalyzes the conversion of glucosamine-6-phosphate to glucosamine-1-phosphate. In Saccharopolyspora erythraea (strain ATCC 11635 / DSM 40517 / JCM 4748 / NBRC 13426 / NCIMB 8594 / NRRL 2338), this protein is Phosphoglucosamine mutase.